The following is a 1009-amino-acid chain: Anillin-like protein 2 (1009 aa).

3 disordered regions span residues 1 to 29 (MYRR…DSNR), 272 to 295 (FGQE…QTIV), and 539 to 558 (GTGY…PTLV). Polar residues predominate over residues 542-557 (YSASSSGPQFTRSPTL). A coiled-coil region spans residues 626-657 (SAADKINDSKRQISKLIETIEKTRKHIQLAEI). Residues 892-1005 (DVEYRGFLYL…WLNAINDTLF (114 aa)) enclose the PH domain.

In terms of tissue distribution, localizes to the surface of the rachis.

In terms of biological role, required to maintain the structure of the rachis, the central cytoplasmic core of the syncytial adult gonad. Failure to maintain the rachis leads to premature dissociation of oocytes and thereby impedes oogenesis. The chain is Anillin-like protein 2 (ani-2) from Caenorhabditis elegans.